A 62-amino-acid polypeptide reads, in one-letter code: Large ribosomal subunit protein bL32 (62 aa).

It belongs to the bacterial ribosomal protein bL32 family.

In Treponema pallidum (strain Nichols), this protein is Large ribosomal subunit protein bL32 (rpmF).